Here is a 388-residue protein sequence, read N- to C-terminus: Probable RNA-binding protein sce3 (388 aa).

Residues 18 to 84 (ESFGSTNWAD…GGMGSGYQRD (67 aa)) form a disordered region. A compositionally biased stretch (polar residues) spans 38–50 (DRTTSTYRATPSS). 3 positions are modified to phosphoserine: Ser49, Ser50, and Ser60. Residue Thr61 is modified to Phosphothreonine. Ser64, Ser67, and Ser71 each carry phosphoserine. Positions 94–169 (FTAHVGNLSF…RPVRITVAEP (76 aa)) constitute an RRM domain. The span at 171–185 (RSFAREERSTGDWVR) shows a compositional bias: basic and acidic residues. Residues 171–388 (RSFAREERST…WTKIGKGRKH (218 aa)) are disordered. At Ser197 the chain carries Phosphoserine. Basic and acidic residues predominate over residues 208–229 (RFRDPARDPSDRVREEPREWVR). Positions 248 to 257 (PRSSSNVNTE) are enriched in polar residues. A phosphoserine mark is found at Ser250, Ser251, and Ser252. Residues 258-268 (ATPSATTTTSS) show a composition bias toward low complexity. A compositionally biased stretch (basic and acidic residues) spans 289 to 349 (RVEEKLAKRT…LGDGEKKSSE (61 aa)). The residue at position 347 (Ser347) is a Phosphoserine.

It is found in the cytoplasm. This chain is Probable RNA-binding protein sce3 (sce3), found in Schizosaccharomyces pombe (strain 972 / ATCC 24843) (Fission yeast).